Consider the following 98-residue polypeptide: MKIACTLVLFVMLRCYVNARNIPGTCRTHTGIILLSGEEWKDPNHCSTYRCSIFDGEAELEGVTCAAYHVPPHCRLVSAANELYPQCCPTVICSDKSR.

A signal peptide spans 1–20 (MKIACTLVLFVMLRCYVNAR).

Post-translationally, contains 4 disulfide bonds. In terms of tissue distribution, expressed by the venom gland.

Its subcellular location is the secreted. The polypeptide is Venom toxin OcyC11 (Opisthacanthus cayaporum (South American scorpion)).